We begin with the raw amino-acid sequence, 78 residues long: Pigment-dispersing hormone peptides (78 aa).

The signal sequence occupies residues 1-22 (MRSAVIVTMLVVVALAALLTQG). The residue at position 75 (alanine 75) is an Alanine amide.

This sequence belongs to the arthropod PDH family. Expressed in eyestalk tissue and cerebral ganglia.

Its subcellular location is the secreted. Its function is as follows. The pigment-dispersing hormone causes the migration of the distal retinal pigment into the proximal end of the pigment chromatophore cells and thus decreases the amount of light entering the retinulas. May also function as a neurotransmitter and/or neuromodulator. This Carcinus maenas (Common shore crab) protein is Pigment-dispersing hormone peptides.